The sequence spans 370 residues: Phosphoserine aminotransferase (370 aa).

An L-glutamate-binding site is contributed by Arg42. Pyridoxal 5'-phosphate contacts are provided by Trp108, Thr158, Asp182, and Gln205. Lys206 is subject to N6-(pyridoxal phosphate)lysine. A pyridoxal 5'-phosphate-binding site is contributed by 247–248 (NT).

This sequence belongs to the class-V pyridoxal-phosphate-dependent aminotransferase family. SerC subfamily. Homodimer. The cofactor is pyridoxal 5'-phosphate.

The protein localises to the cytoplasm. The catalysed reaction is O-phospho-L-serine + 2-oxoglutarate = 3-phosphooxypyruvate + L-glutamate. It catalyses the reaction 4-(phosphooxy)-L-threonine + 2-oxoglutarate = (R)-3-hydroxy-2-oxo-4-phosphooxybutanoate + L-glutamate. It functions in the pathway amino-acid biosynthesis; L-serine biosynthesis; L-serine from 3-phospho-D-glycerate: step 2/3. The protein operates within cofactor biosynthesis; pyridoxine 5'-phosphate biosynthesis; pyridoxine 5'-phosphate from D-erythrose 4-phosphate: step 3/5. Catalyzes the reversible conversion of 3-phosphohydroxypyruvate to phosphoserine and of 3-hydroxy-2-oxo-4-phosphonooxybutanoate to phosphohydroxythreonine. The sequence is that of Phosphoserine aminotransferase from Albidiferax ferrireducens (strain ATCC BAA-621 / DSM 15236 / T118) (Rhodoferax ferrireducens).